The sequence spans 510 residues: Bifunctional purine biosynthesis protein PurH (510 aa).

In terms of domain architecture, MGS-like spans 1–142; it reads MRALLSVSDK…KNFKDVLIVT (142 aa).

The protein belongs to the PurH family.

It catalyses the reaction (6R)-10-formyltetrahydrofolate + 5-amino-1-(5-phospho-beta-D-ribosyl)imidazole-4-carboxamide = 5-formamido-1-(5-phospho-D-ribosyl)imidazole-4-carboxamide + (6S)-5,6,7,8-tetrahydrofolate. The catalysed reaction is IMP + H2O = 5-formamido-1-(5-phospho-D-ribosyl)imidazole-4-carboxamide. It participates in purine metabolism; IMP biosynthesis via de novo pathway; 5-formamido-1-(5-phospho-D-ribosyl)imidazole-4-carboxamide from 5-amino-1-(5-phospho-D-ribosyl)imidazole-4-carboxamide (10-formyl THF route): step 1/1. The protein operates within purine metabolism; IMP biosynthesis via de novo pathway; IMP from 5-formamido-1-(5-phospho-D-ribosyl)imidazole-4-carboxamide: step 1/1. The protein is Bifunctional purine biosynthesis protein PurH of Campylobacter concisus (strain 13826).